A 519-amino-acid polypeptide reads, in one-letter code: Serine/threonine-protein kinase RIO1 (519 aa).

The segment covering 1 to 10 has biased composition (pro residues); that stretch reads MTPAPEPQDP. The disordered stretch occupies residues 1–54; sequence MTPAPEPQDPPTIHEPVATEQTDDISDWDVESDYEDGYGAPSKSQAQGGASAAD. The segment covering 21–36 has biased composition (acidic residues); sequence QTDDISDWDVESDYED. Positions 39 to 53 are enriched in low complexity; it reads GAPSKSQAQGGASAA. The region spanning 122–519 is the Protein kinase domain; sequence SEIYGTISTG…KLVAANKKRK (398 aa). Residues Lys154 and Leu228 each contribute to the ATP site. Residue Asp281 is the Proton acceptor of the active site. Mg(2+) is bound by residues Asn286 and Asp298. Residue Asp298 is the 4-aspartylphosphate intermediate of the active site. The interval 418–519 is disordered; sequence ADSKVPESTG…KLVAANKKRK (102 aa). Acidic residues predominate over residues 439-464; the sequence is GSEDEEGDEGESGEVESGDEEREEGE. The tract at residues 440–519 is association with (pre-)40S ribosomal particle; the sequence is SEDEEGDEGE…KLVAANKKRK (80 aa). Composition is skewed to basic residues over residues 470-489 and 497-519; these read KKRPRGKKHLDKAEKHAHKM and EKRKEKMPKHVKKKLVAANKKRK.

This sequence belongs to the protein kinase superfamily. RIO-type Ser/Thr kinase family. It depends on Mg(2+) as a cofactor. In terms of processing, autophosphorylated.

It is found in the cytoplasm. The catalysed reaction is L-seryl-[protein] + ATP = O-phospho-L-seryl-[protein] + ADP + H(+). The enzyme catalyses L-threonyl-[protein] + ATP = O-phospho-L-threonyl-[protein] + ADP + H(+). It catalyses the reaction ATP + H2O = ADP + phosphate + H(+). Its function is as follows. Involved in the final steps of cytoplasmic maturation of the 40S ribosomal subunit. In vitro, has strong ATPase activity and only low protein kinase activity. The polypeptide is Serine/threonine-protein kinase RIO1 (Chaetomium thermophilum (strain DSM 1495 / CBS 144.50 / IMI 039719) (Thermochaetoides thermophila)).